The primary structure comprises 338 residues: Acetoin:2,6-dichlorophenolindophenol oxidoreductase subunit beta (338 aa).

As to quaternary structure, tetramer of 2 alpha and 2 beta subunits.

Its pathway is ketone degradation; acetoin degradation. Functionally, catalyzes the 2,6-dichlorophenolindophenol-dependent cleavage of acetoin into acetate and acetaldehyde, in vitro. The beta subunit is probably not the catalytic subunit of the enzyme. The sequence is that of Acetoin:2,6-dichlorophenolindophenol oxidoreductase subunit beta (acoB) from Cupriavidus necator (strain ATCC 17699 / DSM 428 / KCTC 22496 / NCIMB 10442 / H16 / Stanier 337) (Ralstonia eutropha).